The sequence spans 351 residues: Auxin efflux carrier component 5 (351 aa).

The next 10 helical transmembrane spans lie at 7–27, 39–59, 71–91, 100–120, 132–152, 210–230, 234–254, 271–291, 295–315, and 329–349; these read VYKV…GYGS, CDAI…IEFT, FIAA…LWAK, WSIT…GVPL, LVVQ…LFVL, ILGI…PGIL, ILIM…IFMA, MVLK…VLGL, VLRV…FIFA, and VIFG…ALEF.

This sequence belongs to the auxin efflux carrier (TC 2.A.69.1) family. As to expression, expressed in elongating parts of hypocotyl, cotyledon vasculature and guard cells. Detected in root pericycle and root tip and at later developmental stages in leaves, stems and flowers. Expressed in veins of mature leaves.

It is found in the endoplasmic reticulum membrane. It localises to the cell membrane. Functionally, auxin transporter regulating intracellular auxin homeostasis and metabolism. Mediates the auxin transport from the cytosol into the lumen of the endoplasmic reticulum. May also act as an auxin efflux carrier when located to the cell membrane. PIN5 and PIN8 may have an antagonistic/compensatory activity. Involved in unfolded protein response (UPR) activation. Involved in the control of vein patterning. Promotes vein formation. PIN5, PIN6, and PIN8 control vein network geometry, but they are expressed in mutually exclusive domains of leaf vascular cells. This Arabidopsis thaliana (Mouse-ear cress) protein is Auxin efflux carrier component 5.